Here is a 338-residue protein sequence, read N- to C-terminus: MGNWPHKHILTLSNFSIDDYESVIELTERFKSLNNAGTKKIPALQGKLITSIFFEASTRTRNSFELAAKRLSADVQSFSPSSSSLSKGETLIDTALTYAAMGSDILVIRHSSSHVPLEISKKLDASKAKTSVLNAGDGLHSHPSQGLLDLYTLIKFFSPKLLKPEILNSKKILIVGDVIHSRVARSNLWALTAFGANIILCGPPTLIPEEFTDFVSSSPPNQLRDPISSRGSITISSSLEESIKCADAVIVLRLQKERMIENLLSSIKSYSENYCLTPEKLSLNCKDIPILHPGPINRGIEISSRVVDEYPNCLINDQVSNGIPTRMALLYLLSKFNN.

Carbamoyl phosphate is bound by residues R59 and T60. Residue K87 participates in L-aspartate binding. The carbamoyl phosphate site is built by R109, H142, and Q145. Residues R182 and R253 each coordinate L-aspartate. Positions 294 and 295 each coordinate carbamoyl phosphate.

It belongs to the aspartate/ornithine carbamoyltransferase superfamily. ATCase family. As to quaternary structure, heterododecamer (2C3:3R2) of six catalytic PyrB chains organized as two trimers (C3), and six regulatory PyrI chains organized as three dimers (R2).

The enzyme catalyses carbamoyl phosphate + L-aspartate = N-carbamoyl-L-aspartate + phosphate + H(+). It functions in the pathway pyrimidine metabolism; UMP biosynthesis via de novo pathway; (S)-dihydroorotate from bicarbonate: step 2/3. Catalyzes the condensation of carbamoyl phosphate and aspartate to form carbamoyl aspartate and inorganic phosphate, the committed step in the de novo pyrimidine nucleotide biosynthesis pathway. The protein is Aspartate carbamoyltransferase catalytic subunit of Prochlorococcus marinus subsp. pastoris (strain CCMP1986 / NIES-2087 / MED4).